A 443-amino-acid chain; its full sequence is ATP-dependent protease ATPase subunit HslU (443 aa).

Residues isoleucine 18 and 60-65 (GVGKTE) each bind ATP. The tract at residues 139-161 (ARDSGFDANPSEENNATRQKFRK) is disordered. ATP contacts are provided by aspartate 256, glutamate 321, and arginine 393.

The protein belongs to the ClpX chaperone family. HslU subfamily. As to quaternary structure, a double ring-shaped homohexamer of HslV is capped on each side by a ring-shaped HslU homohexamer. The assembly of the HslU/HslV complex is dependent on binding of ATP.

The protein resides in the cytoplasm. In terms of biological role, ATPase subunit of a proteasome-like degradation complex; this subunit has chaperone activity. The binding of ATP and its subsequent hydrolysis by HslU are essential for unfolding of protein substrates subsequently hydrolyzed by HslV. HslU recognizes the N-terminal part of its protein substrates and unfolds these before they are guided to HslV for hydrolysis. This chain is ATP-dependent protease ATPase subunit HslU, found in Nitrosomonas eutropha (strain DSM 101675 / C91 / Nm57).